We begin with the raw amino-acid sequence, 622 residues long: WD repeat-containing protein 70 (622 aa).

The span at 37 to 55 (TAVERSKKTLEAREKEEQI) shows a compositional bias: basic and acidic residues. Residues 37–141 (TAVERSKKTL…DNPVKGIPDS (105 aa)) are disordered. Low complexity predominate over residues 67 to 84 (SSSRQKNTDTSSSSSGSE). A compositionally biased stretch (acidic residues) spans 120–132 (SDDEDEEQHEDDD). 7 WD repeats span residues 148–187 (HGTK…ASLQ), 195–236 (CECH…ECVK), 249–289 (GHTA…KHKG), 298–337 (GKRV…HTKF), 344–383 (TPGT…NPLN), 389–434 (ANYF…KVYE), and 437–476 (VTEA…QRGA). Residues 508–533 (REPRQRSTRKQLEKDRLDPVKSHKPE) show a composition bias toward basic and acidic residues. Disordered stretches follow at residues 508–549 (REPR…GTHG) and 602–622 (AEVE…KRKI). Gly residues predominate over residues 539 to 549 (PGRGGRVGTHG). Residues 604 to 614 (VESDEEETDNE) show a composition bias toward acidic residues.

The protein belongs to the WD repeat GAD-1 family.

The chain is WD repeat-containing protein 70 (wdr70) from Xenopus tropicalis (Western clawed frog).